A 358-amino-acid polypeptide reads, in one-letter code: Biotin synthase (358 aa).

The 228-residue stretch at 50 to 277 (NEVQVSTLCS…KSHVRLSAGR (228 aa)) folds into the Radical SAM core domain. Positions 65, 69, and 72 each coordinate [4Fe-4S] cluster. Positions 109, 140, 200, and 272 each coordinate [2Fe-2S] cluster.

It belongs to the radical SAM superfamily. Biotin synthase family. In terms of assembly, homodimer. It depends on [4Fe-4S] cluster as a cofactor. The cofactor is [2Fe-2S] cluster.

The catalysed reaction is (4R,5S)-dethiobiotin + (sulfur carrier)-SH + 2 reduced [2Fe-2S]-[ferredoxin] + 2 S-adenosyl-L-methionine = (sulfur carrier)-H + biotin + 2 5'-deoxyadenosine + 2 L-methionine + 2 oxidized [2Fe-2S]-[ferredoxin]. It participates in cofactor biosynthesis; biotin biosynthesis; biotin from 7,8-diaminononanoate: step 2/2. Catalyzes the conversion of dethiobiotin (DTB) to biotin by the insertion of a sulfur atom into dethiobiotin via a radical-based mechanism. This chain is Biotin synthase, found in Cellvibrio japonicus (strain Ueda107) (Pseudomonas fluorescens subsp. cellulosa).